Consider the following 407-residue polypeptide: uncharacterized protein (407 aa).

Belongs to the peptidase U32 family.

This is an uncharacterized protein from Methanocaldococcus jannaschii (strain ATCC 43067 / DSM 2661 / JAL-1 / JCM 10045 / NBRC 100440) (Methanococcus jannaschii).